Reading from the N-terminus, the 186-residue chain is Peptidyl-tRNA hydrolase (186 aa).

His19 functions as the Proton acceptor in the catalytic mechanism. Residues Phe64, Asn66, and Asn112 each contribute to the tRNA site.

Belongs to the PTH family. Monomer.

It localises to the cytoplasm. It carries out the reaction an N-acyl-L-alpha-aminoacyl-tRNA + H2O = an N-acyl-L-amino acid + a tRNA + H(+). In terms of biological role, hydrolyzes ribosome-free peptidyl-tRNAs (with 1 or more amino acids incorporated), which drop off the ribosome during protein synthesis, or as a result of ribosome stalling. Catalyzes the release of premature peptidyl moieties from peptidyl-tRNA molecules trapped in stalled 50S ribosomal subunits, and thus maintains levels of free tRNAs and 50S ribosomes. In Pelagibacter ubique (strain HTCC1062), this protein is Peptidyl-tRNA hydrolase.